The sequence spans 534 residues: MKITTLVASILMSVLLEPVIASFIDTGKDTSAYNRPLIHLTPNVGWLNDPNGLFYDKKTSVWHAYYQYNPNDTIWGQPLYWGHSSSKDLTHWEEHQVALGPQNDDEGIFSGSIVIDYNNTSGFFDESIDKDQRVVAIYTNSIPDTQTQDIAYSLDGGETFTKYKKNPVIDVNSTQFRDPKVFWHEETNKWIMVVSKSQEYKIQIFGSLDLKTWDLHSNFTSGYLGNQYECPGLIKVPIENTNDYKWVMFLAINPGSPAGGSSNQYFIGEFDGFEFKQDDSITRVMDAGKDFYAFQTFSDNEQDVIGLAWASNWQYANVVPTNPWRSSMSLARKYTLGYVNQNVETKIMTLIQTPILNNLDVINKVEKNNHLLTKNDSVITNFSSSTGLLDFNTTFKVVGESIDSNSLSNIEILIHSQMSNSSTESIKVGFDRSVSAFYFNRDIPNVEFNNNPYFTNKFSTYVEPSHYDEDDMPVYKIYGIVDKNILELYFNDGTQTMTNTFFMSEDKYPHQIEIASNVDGQFELQSLLIRELNN.

The first 21 residues, 1–21, serve as a signal peptide directing secretion; that stretch reads MKITTLVASILMSVLLEPVIA. Residues 46-49 and glutamine 67 contribute to the substrate site; that span reads WLND. Residue aspartate 49 is part of the active site. Residue asparagine 71 is glycosylated (N-linked (GlcNAc...) asparagine). 109-110 is a substrate binding site; sequence FS. N-linked (GlcNAc...) asparagine glycosylation is found at asparagine 118, asparagine 119, and asparagine 172. A substrate-binding site is contributed by 177–178; that stretch reads RD. The N-linked (GlcNAc...) asparagine glycan is linked to asparagine 218. Residues glutamate 229 and tryptophan 313 each coordinate substrate. 4 N-linked (GlcNAc...) asparagine glycosylation sites follow: asparagine 375, asparagine 381, asparagine 392, and asparagine 420.

It belongs to the glycosyl hydrolase 32 family.

It carries out the reaction Hydrolysis of terminal non-reducing beta-D-fructofuranoside residues in beta-D-fructofuranosides.. In Debaryomyces hansenii (strain ATCC 36239 / CBS 767 / BCRC 21394 / JCM 1990 / NBRC 0083 / IGC 2968) (Yeast), this protein is Invertase (INV).